Here is a 289-residue protein sequence, read N- to C-terminus: (3R)-3-[(carboxymethyl)amino]fatty acid oxygenase/decarboxylase (289 aa).

Tyrosine 65, tyrosine 70, and glycine 93 together coordinate a (3R)-3-[(carboxymethyl)amino]fatty acid. Fe(2+) is bound by residues histidine 97 and aspartate 99. 2 residues coordinate a (3R)-3-[(carboxymethyl)amino]fatty acid: tyrosine 100 and lysine 158. Histidine 260 contributes to the Fe(2+) binding site. Histidine 264 contributes to the 2-oxoglutarate binding site. Arginine 275 serves as a coordination point for a (3R)-3-[(carboxymethyl)amino]fatty acid.

The protein belongs to the TfdA dioxygenase family. It depends on Fe(2+) as a cofactor.

It catalyses the reaction a (3R)-3-[(carboxymethyl)amino]fatty acid + 2 2-oxoglutarate + 2 O2 = a (3R)-3-isocyanyl-fatty acid + 2 succinate + 3 CO2 + 2 H2O. The catalysed reaction is a (3R)-3-[(carboxymethyl)amino]fatty acid + 2-oxoglutarate + O2 = a (3R)-3-{[carboxy(hydroxy)methyl]amino}fatty acid + succinate + CO2. It carries out the reaction a (3R)-3-{[carboxy(hydroxy)methyl]amino}fatty acid + 2-oxoglutarate + O2 = a (3R)-3-isocyanyl-fatty acid + succinate + 2 CO2 + 2 H2O. Involved in the biosynthesis of a unique class of isonitrile lipopeptides (INLPs) that seem to play a role in metal acquisition. Catalyzes the conversion of (3R)-3-[(carboxymethyl)amino]fatty acids to (3R)-3-isocyanyl-fatty acids through an oxidative decarboxylation mechanism, thereby generating the isonitrile group of INLPs. The protein is (3R)-3-[(carboxymethyl)amino]fatty acid oxygenase/decarboxylase of Mycobacterium bovis (strain ATCC BAA-935 / AF2122/97).